The chain runs to 622 residues: Type 2 DNA topoisomerase 6 subunit B (622 aa).

ATP is bound by residues asparagine 48, aspartate 80, 101-102 (SR), 111-118 (GQQGIGIS), and lysine 435.

Belongs to the TOP6B family. Homodimer. Heterotetramer of two Top6A and two Top6B chains.

It carries out the reaction ATP-dependent breakage, passage and rejoining of double-stranded DNA.. In terms of biological role, relaxes both positive and negative superturns and exhibits a strong decatenase activity. This is Type 2 DNA topoisomerase 6 subunit B from Methanococcoides burtonii (strain DSM 6242 / NBRC 107633 / OCM 468 / ACE-M).